The chain runs to 562 residues: 63 kDa globulin-like protein (562 aa).

The signal sequence occupies residues 1-23 (MATRARATILLLLAAVLFAAAAA). Basic and acidic residues predominate over residues 63–88 (QQQQERRREHGGHDDDRRDRDRRGEG). A disordered region spans residues 63-103 (QQQQERRREHGGHDDDRRDRDRRGEGSSEEEDEGRERGSRR). Cupin type-1 domains lie at 106–264 (YVFG…EKLE) and 312–507 (FNIL…REVD). N350 is a glycosylation site (N-linked (GlcNAc...) asparagine). Disordered stretches follow at residues 383-430 (PHLS…QVGQ) and 516-550 (SAFL…GDEA). Over residues 390-408 (RGGESEERRRERGKGKWRE) the composition is skewed to basic and acidic residues. Positions 409 to 427 (EEEEEEEQQKGQEEEEEEQ) are enriched in acidic residues.

It belongs to the 7S seed storage protein family.

Its subcellular location is the secreted. Functionally, seed storage protein. The sequence is that of 63 kDa globulin-like protein from Oryza sativa subsp. japonica (Rice).